The following is an 87-amino-acid chain: Exendin-3 (87 aa).

Residues 1–21 form the signal peptide; it reads MKIILWLCVFGLFLATLFPVS. Positions 22-45 are excised as a propeptide; sequence WQMPVESGLSSEDSASSESFASKI. At serine 86 the chain carries Serine amide.

The protein belongs to the glucagon family. As to expression, expressed by the venom gland.

It is found in the secreted. Stimulates vasoactive intestinal peptide (VIP) receptors in high concentrations (&gt;100 nM), resulting in both an increase in cAMP and amylase secretion from pancreatic acini, although at low concentrations (between 0.3 and 3 nM) it increases cAMP without stimulating amylase release. Stimulates the GLP-1 receptor (GLP1R). Induces hypotension that is mediated by relaxation of cardiac smooth muscle. This Heloderma horridum horridum (Mexican beaded lizard) protein is Exendin-3.